A 536-amino-acid chain; its full sequence is Thiamine transport system permease protein ThiP (536 aa).

The next 12 membrane-spanning stretches (helical) occupy residues 12-32 (WLIP…AAFL), 58-78 (FSFW…IFLA), 95-115 (LCAM…LSVY), 134-154 (FSPY…LPMA), 199-219 (VAAL…SLGG), 240-260 (PARA…LVLL), 293-313 (VLIV…IVDG), 334-354 (SLRI…MLLW), 374-394 (SGML…FLLL), 404-424 (ADGI…LKVL), 463-483 (AQAL…VALF), and 506-526 (DGAV…TVIE). The region spanning 56–261 (VRFSFWQAFL…VCCLGLVLLS (206 aa)) is the ABC transmembrane type-1 1 domain. The region spanning 331 to 525 (LWTSLRIALA…LLCFLLFTVI (195 aa)) is the ABC transmembrane type-1 2 domain.

It belongs to the binding-protein-dependent transport system permease family. CysTW subfamily. The complex is composed of two ATP-binding proteins (ThiQ), two transmembrane proteins (ThiP) and a solute-binding protein (ThiB).

It is found in the cell inner membrane. With respect to regulation, transport is inhibited by the sulfhydryl-specific modifier N-ethylmaleimide. In terms of biological role, part of the ABC transporter complex ThiBPQ involved in thiamine import. Probably responsible for the translocation of the substrate across the membrane. This is Thiamine transport system permease protein ThiP (thiP) from Escherichia coli (strain K12).